The primary structure comprises 31 residues: Photosystem II reaction center protein T (31 aa).

The helical transmembrane segment at A3–F23 threads the bilayer.

The protein belongs to the PsbT family. PSII is composed of 1 copy each of membrane proteins PsbA, PsbB, PsbC, PsbD, PsbE, PsbF, PsbH, PsbI, PsbJ, PsbK, PsbL, PsbM, PsbT, PsbX, PsbY, Psb30/Ycf12, peripheral proteins PsbO, CyanoQ (PsbQ), PsbU, PsbV and a large number of cofactors. It forms dimeric complexes.

It is found in the cellular thylakoid membrane. In terms of biological role, found at the monomer-monomer interface of the photosystem II (PS II) dimer, plays a role in assembly and dimerization of PSII. PSII is a light-driven water plastoquinone oxidoreductase, using light energy to abstract electrons from H(2)O, generating a proton gradient subsequently used for ATP formation. This is Photosystem II reaction center protein T from Prochlorococcus marinus (strain SARG / CCMP1375 / SS120).